A 393-amino-acid polypeptide reads, in one-letter code: Phosphoglycerate kinase (393 aa).

Residues 21 to 23 (DLN), Arg36, 59 to 62 (HLGR), Arg113, and Arg146 contribute to the substrate site. Residues Lys197, Glu319, and 345 to 348 (GGDT) each bind ATP.

It belongs to the phosphoglycerate kinase family. In terms of assembly, monomer.

It is found in the cytoplasm. The catalysed reaction is (2R)-3-phosphoglycerate + ATP = (2R)-3-phospho-glyceroyl phosphate + ADP. It participates in carbohydrate degradation; glycolysis; pyruvate from D-glyceraldehyde 3-phosphate: step 2/5. This Nitratidesulfovibrio vulgaris (strain ATCC 29579 / DSM 644 / CCUG 34227 / NCIMB 8303 / VKM B-1760 / Hildenborough) (Desulfovibrio vulgaris) protein is Phosphoglycerate kinase.